Consider the following 215-residue polypeptide: Adenylate kinase (215 aa).

10–15 (GAGKGT) lines the ATP pocket. The segment at 30-59 (STGDMLRAAIKAGTPLGLEAKKIIDEGGLV) is NMP. AMP contacts are provided by residues Thr-31, Arg-36, 57–59 (GLV), 85–88 (GFPR), and Gln-92. Positions 122–159 (GRRVHLASGRTYHVTYNPPKTEGKDDVTGEDLIQRDDD) are LID. Residues Arg-123 and 132–133 (TY) contribute to the ATP site. AMP-binding residues include Arg-156 and Arg-167. Gln-200 contributes to the ATP binding site.

The protein belongs to the adenylate kinase family. Monomer.

The protein localises to the cytoplasm. The enzyme catalyses AMP + ATP = 2 ADP. It participates in purine metabolism; AMP biosynthesis via salvage pathway; AMP from ADP: step 1/1. Catalyzes the reversible transfer of the terminal phosphate group between ATP and AMP. Plays an important role in cellular energy homeostasis and in adenine nucleotide metabolism. The sequence is that of Adenylate kinase from Neisseria gonorrhoeae (strain ATCC 700825 / FA 1090).